A 451-amino-acid polypeptide reads, in one-letter code: UDP-N-acetylmuramate--L-alanine ligase (451 aa).

An ATP-binding site is contributed by 110 to 116 (GTHGKTT).

The protein belongs to the MurCDEF family.

It is found in the cytoplasm. The catalysed reaction is UDP-N-acetyl-alpha-D-muramate + L-alanine + ATP = UDP-N-acetyl-alpha-D-muramoyl-L-alanine + ADP + phosphate + H(+). Its pathway is cell wall biogenesis; peptidoglycan biosynthesis. Functionally, cell wall formation. This Francisella tularensis subsp. novicida (strain U112) protein is UDP-N-acetylmuramate--L-alanine ligase.